A 117-amino-acid chain; its full sequence is NADH-ubiquinone oxidoreductase chain 3 (117 aa).

3 consecutive transmembrane segments (helical) span residues 4 to 24 (FLGILIYFFIALALSLLLLGL), 61 to 81 (LVAILFIIFDLEVAFLFPWAL), and 86 to 106 (IGYFGFWSMMLFLFILTVGFI).

The protein belongs to the complex I subunit 3 family.

The protein resides in the mitochondrion membrane. The catalysed reaction is a ubiquinone + NADH + 5 H(+)(in) = a ubiquinol + NAD(+) + 4 H(+)(out). Its function is as follows. Core subunit of the mitochondrial membrane respiratory chain NADH dehydrogenase (Complex I) that is believed to belong to the minimal assembly required for catalysis. Complex I functions in the transfer of electrons from NADH to the respiratory chain. The immediate electron acceptor for the enzyme is believed to be ubiquinone. In Prototheca wickerhamii, this protein is NADH-ubiquinone oxidoreductase chain 3 (NAD3).